The sequence spans 564 residues: MARPKNVKHIFVTGGVVSSLGKGILSASLGLLLKSRGLRVAIQKYDPYINVDPGTMSPYQHGEVYVTDDGAETDLDLGHYERFLDEATSQQSNLTMGRVYKSVIDKERQGEYLGGTVQVVPHVIDEIKERMGELAKNSNLDILITEIGGTIGDIESLPFLEAMRQLKLDFGPKNMLNIHLTLVPYIKAACELKTKPTQHSVKMLLETGIQPDILVCRSEKPLSREIKNKVGHFCNLHELDVIGLSDCDTIYGVPLMLLNEKLDIRVLKKLGLKKYKEPDLAYWKEFCNKVQHPTDGEVTIAICGKYTEYPDAYKSILESLVHAGADNNVRVHVRLIRAEDAEENGSDVKTALEGVHGVLVAPGFGDRGIEGKIRFVQYARENNIPFLGICLGMQCASIEFARNVCGLSEANSTEFSKRCRQPVIDLMEHQKKVKEKGGTMRLGSYPCILKEGTKAHQAYDKFLINERHRHRYEFNNEYRRLFEDNGMVFSGTSPNGELVEIVEISNHRWFVAVQFHPEYKSRVHCVHPLFSGFVAAAKEFAHGARQLSFEPEAPSFQVMPGAEN.

Positions 1–272 are amidoligase domain; sequence MARPKNVKHI…DIRVLKKLGL (272 aa). S18 lines the CTP pocket. S18 contacts UTP. 19 to 24 is an ATP binding site; the sequence is SLGKGI. Y59 provides a ligand contact to L-glutamine. D76 serves as a coordination point for ATP. Positions 76 and 146 each coordinate Mg(2+). CTP contacts are provided by residues 153 to 155, 193 to 198, and K229; these read DIE and KTKPTQ. UTP contacts are provided by residues 193–198 and K229; that span reads KTKPTQ. The region spanning 299–543 is the Glutamine amidotransferase type-1 domain; sequence TIAICGKYTE…VAAAKEFAHG (245 aa). G363 contributes to the L-glutamine binding site. C390 (nucleophile; for glutamine hydrolysis) is an active-site residue. L-glutamine is bound by residues 391–394, E414, and R471; that span reads LGMQ. Residues H516 and E518 contribute to the active site.

Belongs to the CTP synthase family. Homotetramer.

The enzyme catalyses UTP + L-glutamine + ATP + H2O = CTP + L-glutamate + ADP + phosphate + 2 H(+). It catalyses the reaction L-glutamine + H2O = L-glutamate + NH4(+). The catalysed reaction is UTP + NH4(+) + ATP = CTP + ADP + phosphate + 2 H(+). It functions in the pathway pyrimidine metabolism; CTP biosynthesis via de novo pathway; CTP from UDP: step 2/2. Allosterically activated by GTP, when glutamine is the substrate; GTP has no effect on the reaction when ammonia is the substrate. The allosteric effector GTP functions by stabilizing the protein conformation that binds the tetrahedral intermediate(s) formed during glutamine hydrolysis. Inhibited by the product CTP, via allosteric rather than competitive inhibition. Catalyzes the ATP-dependent amination of UTP to CTP with either L-glutamine or ammonia as the source of nitrogen. Regulates intracellular CTP levels through interactions with the four ribonucleotide triphosphates. This is CTP synthase from Prosthecochloris aestuarii (strain DSM 271 / SK 413).